The chain runs to 365 residues: Embryonic developmental protein tofu-6 (365 aa).

Positions 13–90 constitute an RRM domain; sequence AGFHIRNVPK…YSLKVSDHKN (78 aa).

Functionally, required maternally for early embryonic cell divisions. May have a role in DNA replication. The sequence is that of Embryonic developmental protein tofu-6 from Caenorhabditis briggsae.